The following is a 208-amino-acid chain: Thymidylate kinase (208 aa).

10–17 (GLEGAGKS) is a binding site for ATP.

The protein belongs to the thymidylate kinase family.

It catalyses the reaction dTMP + ATP = dTDP + ADP. Phosphorylation of dTMP to form dTDP in both de novo and salvage pathways of dTTP synthesis. This chain is Thymidylate kinase, found in Pseudoalteromonas translucida (strain TAC 125).